The chain runs to 424 residues: 3-phosphoshikimate 1-carboxyvinyltransferase (424 aa).

3-phosphoshikimate contacts are provided by K21, S22, and R26. Residue K21 participates in phosphoenolpyruvate binding. Residues G92 and R120 each coordinate phosphoenolpyruvate. 3-phosphoshikimate is bound by residues S163, S164, Q165, S191, D306, and K333. Q165 is a phosphoenolpyruvate binding site. The Proton acceptor role is filled by D306. R337, R379, and K405 together coordinate phosphoenolpyruvate.

This sequence belongs to the EPSP synthase family. As to quaternary structure, monomer.

The protein localises to the cytoplasm. It catalyses the reaction 3-phosphoshikimate + phosphoenolpyruvate = 5-O-(1-carboxyvinyl)-3-phosphoshikimate + phosphate. Its pathway is metabolic intermediate biosynthesis; chorismate biosynthesis; chorismate from D-erythrose 4-phosphate and phosphoenolpyruvate: step 6/7. In terms of biological role, catalyzes the transfer of the enolpyruvyl moiety of phosphoenolpyruvate (PEP) to the 5-hydroxyl of shikimate-3-phosphate (S3P) to produce enolpyruvyl shikimate-3-phosphate and inorganic phosphate. This is 3-phosphoshikimate 1-carboxyvinyltransferase from Clostridium perfringens (strain ATCC 13124 / DSM 756 / JCM 1290 / NCIMB 6125 / NCTC 8237 / Type A).